A 73-amino-acid polypeptide reads, in one-letter code: Small ribosomal subunit protein bS18 (73 aa).

Belongs to the bacterial ribosomal protein bS18 family. Part of the 30S ribosomal subunit. Forms a tight heterodimer with protein bS6.

In terms of biological role, binds as a heterodimer with protein bS6 to the central domain of the 16S rRNA, where it helps stabilize the platform of the 30S subunit. This is Small ribosomal subunit protein bS18 from Coxiella burnetii (strain Dugway 5J108-111).